A 539-amino-acid chain; its full sequence is Probable protein kinase UbiB (539 aa).

The helical transmembrane segment at 23–43 (DLLFALPLPWWMLAVRFVLPW) threads the bilayer. Positions 125–492 (RFDETPLASA…WHDRKDEPVL (368 aa)) constitute a Protein kinase domain. ATP is bound by residues 131–139 (LASASVAQV) and K153. The Proton acceptor role is filled by D288. 2 consecutive transmembrane segments (helical) span residues 494–514 (LIGA…SEAA) and 517–537 (LLTL…YLIV).

Belongs to the ABC1 family. UbiB subfamily.

Its subcellular location is the cell inner membrane. It functions in the pathway cofactor biosynthesis; ubiquinone biosynthesis [regulation]. Its function is as follows. Is probably a protein kinase regulator of UbiI activity which is involved in aerobic coenzyme Q (ubiquinone) biosynthesis. In Pseudomonas syringae pv. tomato (strain ATCC BAA-871 / DC3000), this protein is Probable protein kinase UbiB.